A 293-amino-acid chain; its full sequence is Bifunctional protein FolD (293 aa).

NADP(+) is bound by residues 162 to 164 (GQS) and isoleucine 227.

This sequence belongs to the tetrahydrofolate dehydrogenase/cyclohydrolase family. Homodimer.

The catalysed reaction is (6R)-5,10-methylene-5,6,7,8-tetrahydrofolate + NADP(+) = (6R)-5,10-methenyltetrahydrofolate + NADPH. It carries out the reaction (6R)-5,10-methenyltetrahydrofolate + H2O = (6R)-10-formyltetrahydrofolate + H(+). Its pathway is one-carbon metabolism; tetrahydrofolate interconversion. Functionally, catalyzes the oxidation of 5,10-methylenetetrahydrofolate to 5,10-methenyltetrahydrofolate and then the hydrolysis of 5,10-methenyltetrahydrofolate to 10-formyltetrahydrofolate. The sequence is that of Bifunctional protein FolD from Metamycoplasma arthritidis (strain 158L3-1) (Mycoplasma arthritidis).